The sequence spans 89 residues: uncharacterized protein (89 aa).

Residues 20–39 (SFAMTTYLNLFVKLLIFLYI) traverse the membrane as a helical segment.

Its subcellular location is the membrane. This is an uncharacterized protein from Escherichia coli (strain K12).